Reading from the N-terminus, the 86-residue chain is Large ribosomal subunit protein bL27 (86 aa).

Residues methionine 1 to threonine 10 are compositionally biased toward gly residues. Positions methionine 1 to glycine 22 are disordered.

The protein belongs to the bacterial ribosomal protein bL27 family.

The polypeptide is Large ribosomal subunit protein bL27 (Polynucleobacter asymbioticus (strain DSM 18221 / CIP 109841 / QLW-P1DMWA-1) (Polynucleobacter necessarius subsp. asymbioticus)).